We begin with the raw amino-acid sequence, 68 residues long: Coiled-coil domain-containing protein 179 (68 aa).

The tract at residues serine 11–serine 68 is disordered. A compositionally biased stretch (basic and acidic residues) spans proline 18 to glutamate 28. A coiled-coil region spans residues threonine 27–phenylalanine 53. Positions histidine 41–serine 54 are enriched in basic residues.

The chain is Coiled-coil domain-containing protein 179 (CCDC179) from Homo sapiens (Human).